The sequence spans 123 residues: Small ribosomal subunit protein uS13 (123 aa).

The tract at residues 103 to 123 (TRTNARTRKGPKKTVGVRRKK) is disordered. A compositionally biased stretch (basic residues) spans 105–123 (TNARTRKGPKKTVGVRRKK).

The protein belongs to the universal ribosomal protein uS13 family. As to quaternary structure, part of the 30S ribosomal subunit. Forms a loose heterodimer with protein S19. Forms two bridges to the 50S subunit in the 70S ribosome.

Functionally, located at the top of the head of the 30S subunit, it contacts several helices of the 16S rRNA. In the 70S ribosome it contacts the 23S rRNA (bridge B1a) and protein L5 of the 50S subunit (bridge B1b), connecting the 2 subunits; these bridges are implicated in subunit movement. Contacts the tRNAs in the A and P-sites. The polypeptide is Small ribosomal subunit protein uS13 (Desulforudis audaxviator (strain MP104C)).